We begin with the raw amino-acid sequence, 183 residues long: Small ribosomal subunit protein uS4c (183 aa).

In terms of domain architecture, S4 RNA-binding spans 82–143 (MRLDNILFRL…KQRSKALIQN (62 aa)).

Belongs to the universal ribosomal protein uS4 family. Part of the 30S ribosomal subunit. Contacts protein S5. The interaction surface between S4 and S5 is involved in control of translational fidelity.

The protein localises to the plastid. Its subcellular location is the chloroplast. One of the primary rRNA binding proteins, it binds directly to 16S rRNA where it nucleates assembly of the body of the 30S subunit. Its function is as follows. With S5 and S12 plays an important role in translational accuracy. The sequence is that of Small ribosomal subunit protein uS4c (rps4) from Sparaxis sp. (strain Lejeune 1997).